We begin with the raw amino-acid sequence, 75 residues long: Antitoxin MT0312 (75 aa).

In terms of biological role, antitoxin component of a type II toxin-antitoxin (TA) system. This is Antitoxin MT0312 from Mycobacterium tuberculosis (strain CDC 1551 / Oshkosh).